The sequence spans 321 residues: Ribosomal RNA small subunit methyltransferase H (321 aa).

S-adenosyl-L-methionine-binding positions include 40-42, aspartate 60, phenylalanine 84, aspartate 106, and glutamine 113; that span reads GGH.

This sequence belongs to the methyltransferase superfamily. RsmH family.

The protein resides in the cytoplasm. The enzyme catalyses cytidine(1402) in 16S rRNA + S-adenosyl-L-methionine = N(4)-methylcytidine(1402) in 16S rRNA + S-adenosyl-L-homocysteine + H(+). In terms of biological role, specifically methylates the N4 position of cytidine in position 1402 (C1402) of 16S rRNA. This is Ribosomal RNA small subunit methyltransferase H from Histophilus somni (strain 2336) (Haemophilus somnus).